We begin with the raw amino-acid sequence, 4678 residues long: E3 ubiquitin-protein ligase MYCBP2 (4678 aa).

Disordered regions lie at residues 87–127 (DRDQ…RSKS), 172–192 (SKNS…SKEP), and 609–628 (ASKG…KPYK). Over residues 100-124 (SRNKKILNKKKLKRKQKSKSKVKTR) the composition is skewed to basic residues. A phosphoserine mark is found at Ser127, Ser178, Ser181, and Ser183. RCC1 repeat units lie at residues 600–655 (DGSI…VISK), 699–755 (NGEV…MMCP), 907–957 (KRDK…VLME), 958–1008 (NGDV…VLLM), and 1010–1066 (GQVF…LRID). The segment covering 898–910 (RSHPAQLKHKRDK) has biased composition (basic residues). The tract at residues 898–928 (RSHPAQLKHKRDKHKDGSGERGEKDASKITT) is disordered. Positions 911–924 (HKDGSGERGEKDAS) are enriched in basic and acidic residues. A PHR domain 1 region spans residues 1235–1386 (NRFESHGGGW…GQIPQLLYRL (152 aa)). Ser1624 carries the post-translational modification Phosphoserine. The interval 1726–1884 (NRFTKTSQGR…GQIPQILYYR (159 aa)) is PHR domain 2. The cysteines at positions 1748 and 1863 are disulfide-linked. Disordered stretches follow at residues 1993–2012 (FNPN…QGLS) and 2321–2340 (QQDQ…VTAA). Over residues 1994–2012 (NPNQSTDSTTGNQPEQGLS) the composition is skewed to polar residues. Residues 2022-2550 (VIESEHPYKP…NQHLGKSLLV (529 aa)) are RAE1 binding. One copy of the Filamin repeat lies at 2341-2443 (SSNTDMTYGG…IDAGLEVKVK (103 aa)). Thr2683 carries the phosphothreonine modification. Disordered stretches follow at residues 2709–2931 (LGNS…LHSE), 2943–2963 (TNSL…VDEG), 2979–3020 (EQEM…EPAK), and 3066–3085 (APIR…ETKL). Over residues 2718–2733 (NISTSSKPASTSGKSE) the composition is skewed to polar residues. The span at 2742 to 2760 (LKPDGRMSRTTADQKKPRG) shows a compositional bias: basic and acidic residues. At Ser2769 the chain carries Phosphoserine. Over residues 2775 to 2785 (DAAKLRSDSHS) the composition is skewed to basic and acidic residues. Residues 2786–2810 (RSLSPNHNTLQTLKSDGRMPSSSRA) show a composition bias toward polar residues. Phosphoserine occurs at positions 2787, 2789, 2833, 2839, 2869, 2871, and 2920. A compositionally biased stretch (low complexity) spans 2828-2843 (PANRSSPSGASSPRSS). The span at 2860 to 2871 (TKLDPPRERSKS) shows a compositional bias: basic and acidic residues. At Ser2985 the chain carries Phosphoserine. Residues 2988-3001 (ISRKCANRHTRPKK) are compositionally biased toward basic residues. Ser3090, Ser3478, and Ser3505 each carry phosphoserine. The interval 3605–3631 (PVEPEEEEDEENKTSKENSEQEKDTRV) is disordered. The segment covering 3616–3631 (NKTSKENSEQEKDTRV) has biased composition (basic and acidic residues). The DOC domain maps to 3719 to 3897 (SISIQSGFEA…VAQQRNCEAE (179 aa)). The disordered stretch occupies residues 3915–3934 (SGDAEPTPEQEEKALLSSPE). A Phosphothreonine modification is found at Thr3921. Ser3931 and Ser3932 each carry phosphoserine. Zn(2+)-binding residues include Cys4428, Cys4431, Cys4446, His4448, His4451, Cys4454, Cys4475, Cys4478, Cys4544, and Cys4547. The RING-type; atypical zinc finger occupies 4428–4479 (CMICFTEALSAAPAIQLDCSHIFHLQCCRRVLENRWLGPRITFGFISCPICK). Residues 4539-4676 (YAYYVCYKCR…LGCGVCRNAH (138 aa)) are tandem cysteine domain. Cys4558 is a catalytic residue. Residues Cys4575, Cys4578, Cys4587, His4590, Cys4599, Cys4602, and Cys4603 each contribute to the Zn(2+) site. Cys4610 is a catalytic residue. Zn(2+) is bound by residues Cys4617, Cys4620, Cys4638, Cys4652, His4658, Cys4669, and Cys4672.

The protein belongs to the RING-Cys relay (RCR) family. Interacts with MYC. Interacts with TSC2 (tuberin) when TSC2 is in complex with TSC1 (hamartin). Interacts with FBXO45. Interacts with RAE1. Interacts with CPNE1 (via VWFA domain) and CPNE4 (via VWFA domain). Interacts with (sumoylated) RANGAP1; interaction with sumoylated RANGAP1 inhibits E3 ubiquitin-protein ligase activity and promotes MYCBP2 translocation to the nucleus. Interacts with RAN. Interacts with ATP13A2; the interaction inhibits the ubiquitination of TSC2 by MYCBP2. Interacts with USP11. Post-translationally, autoubiquitinated. As to expression, expressed in all tissues examined, expression is exceptionally abundant in brain and thymus. Colocalizes with TSC1 and TSC2 along the neurites and in the growth cones. Highly expressed in peripheral and central neurons. Colocalized with TSC1 in one of the filopodial extensions at the tip of a growth cone.

The protein resides in the nucleus. It localises to the cell projection. Its subcellular location is the axon. It is found in the cytoplasm. The protein localises to the cytoskeleton. The enzyme catalyses [E2 ubiquitin-conjugating enzyme]-S-ubiquitinyl-L-cysteine + [acceptor protein]-L-threonine = [E2 ubiquitin-conjugating enzyme]-L-cysteine + [acceptor protein]-3-O-ubiquitinyl-L-threonine.. Its pathway is protein modification; protein ubiquitination. Its function is as follows. Atypical E3 ubiquitin-protein ligase which specifically mediates ubiquitination of threonine and serine residues on target proteins, instead of ubiquitinating lysine residues. Shows esterification activity towards both threonine and serine, with a preference for threonine, and acts via two essential catalytic cysteine residues that relay ubiquitin to its substrate via thioester intermediates. Interacts with the E2 enzymes UBE2D1, UBE2D3, UBE2E1 and UBE2L3. Plays a key role in neural development, probably by mediating ubiquitination of threonine residues on target proteins. Involved in different processes such as regulation of neurite outgrowth, synaptic growth, synaptogenesis and axon degeneration. Required for the formation of major central nervous system axon tracts. Required for proper axon growth by regulating axon navigation and axon branching: acts by regulating the subcellular location and stability of MAP3K12/DLK. Required for proper localization of retinogeniculate projections but not for eye-specific segregation. Regulates axon guidance in the olfactory system. Involved in Wallerian axon degeneration, an evolutionarily conserved process that drives the loss of damaged axons: acts by promoting destabilization of NMNAT2, probably via ubiquitination of NMNAT2. Catalyzes ubiquitination of threonine and/or serine residues on NMNAT2, consequences of threonine and/or serine ubiquitination are however unknown. Regulates the internalization of TRPV1 in peripheral sensory neurons. Mediates ubiquitination and subsequent proteasomal degradation of TSC2/tuberin. Independently of the E3 ubiquitin-protein ligase activity, also acts as a guanosine exchange factor (GEF) for RAN in neurons of dorsal root ganglia. May function as a facilitator or regulator of transcriptional activation by MYC. Acts in concert with HUWE1 to regulate the circadian clock gene expression by promoting the lithium-induced ubiquination and degradation of NR1D1. The protein is E3 ubiquitin-protein ligase MYCBP2 of Homo sapiens (Human).